A 405-amino-acid chain; its full sequence is Cytoplasmic tRNA 2-thiolation protein 2 (405 aa).

The protein belongs to the CTU2/NCS2 family.

The protein resides in the cytoplasm. It functions in the pathway tRNA modification; 5-methoxycarbonylmethyl-2-thiouridine-tRNA biosynthesis. In terms of biological role, plays a central role in 2-thiolation of mcm(5)S(2)U at tRNA wobble positions of tRNA(Lys), tRNA(Glu) and tRNA(Gln). May act by forming a heterodimer with NCS6/CTU1 that ligates sulfur from thiocarboxylated URM1 onto the uridine of tRNAs at wobble position. In Drosophila persimilis (Fruit fly), this protein is Cytoplasmic tRNA 2-thiolation protein 2.